We begin with the raw amino-acid sequence, 351 residues long: Uroporphyrinogen decarboxylase (351 aa).

Residues 25–29 (RQAGR), Asp74, Tyr151, Ser206, and His325 each bind substrate.

It belongs to the uroporphyrinogen decarboxylase family. In terms of assembly, homodimer.

The protein resides in the cytoplasm. The catalysed reaction is uroporphyrinogen III + 4 H(+) = coproporphyrinogen III + 4 CO2. The protein operates within porphyrin-containing compound metabolism; protoporphyrin-IX biosynthesis; coproporphyrinogen-III from 5-aminolevulinate: step 4/4. Catalyzes the decarboxylation of four acetate groups of uroporphyrinogen-III to yield coproporphyrinogen-III. The chain is Uroporphyrinogen decarboxylase from Chlorobium limicola (strain DSM 245 / NBRC 103803 / 6330).